Consider the following 333-residue polypeptide: Anthranilate phosphoribosyltransferase (333 aa).

5-phospho-alpha-D-ribose 1-diphosphate is bound by residues Gly81, 84 to 85 (GD), Thr89, 91 to 94 (NIST), 109 to 117 (KHGNRSVSS), and Ala121. Gly81 is a binding site for anthranilate. Ser93 is a Mg(2+) binding site. Asn112 contributes to the anthranilate binding site. Arg167 provides a ligand contact to anthranilate. Residues Asp225 and Glu226 each contribute to the Mg(2+) site.

The protein belongs to the anthranilate phosphoribosyltransferase family. Homodimer. Mg(2+) is required as a cofactor.

It catalyses the reaction N-(5-phospho-beta-D-ribosyl)anthranilate + diphosphate = 5-phospho-alpha-D-ribose 1-diphosphate + anthranilate. It participates in amino-acid biosynthesis; L-tryptophan biosynthesis; L-tryptophan from chorismate: step 2/5. Catalyzes the transfer of the phosphoribosyl group of 5-phosphorylribose-1-pyrophosphate (PRPP) to anthranilate to yield N-(5'-phosphoribosyl)-anthranilate (PRA). This is Anthranilate phosphoribosyltransferase from Actinobacillus succinogenes (strain ATCC 55618 / DSM 22257 / CCUG 43843 / 130Z).